The sequence spans 502 residues: RNA-splicing ligase RtcB homolog 2 (502 aa).

Mn(2+)-binding residues include D120, C123, H228, H260, and H354. N227–E231 lines the GMP pocket. GMP contacts are provided by residues H354–N355, G403–M406, S410, and H429–G432. H429 (GMP-histidine intermediate) is an active-site residue.

It belongs to the RtcB family. Catalytic component of the tRNA-splicing ligase complex. Mn(2+) is required as a cofactor.

The enzyme catalyses a 3'-end 3'-phospho-ribonucleotide-RNA + a 5'-end dephospho-ribonucleoside-RNA + GTP = a ribonucleotidyl-ribonucleotide-RNA + GMP + diphosphate. The catalysed reaction is a 3'-end 2',3'-cyclophospho-ribonucleotide-RNA + a 5'-end dephospho-ribonucleoside-RNA + GTP + H2O = a ribonucleotidyl-ribonucleotide-RNA + GMP + diphosphate + H(+). Its function is as follows. Catalytic subunit of the tRNA-splicing ligase complex that acts by directly joining spliced tRNA halves to mature-sized tRNAs by incorporating the precursor-derived splice junction phosphate into the mature tRNA as a canonical 3',5'-phosphodiester. May act as an RNA ligase with broad substrate specificity, and may function toward other RNAs. The protein is RNA-splicing ligase RtcB homolog 2 of Culex quinquefasciatus (Southern house mosquito).